The following is a 120-amino-acid chain: Proteinase inhibitor (120 aa).

Positions 1–19 (MKQLIIATLLSALSGGCMA) are cleaved as a signal peptide. A disulfide bridge links cysteine 43 with cysteine 65.

Belongs to the protease inhibitor I38 family. As to quaternary structure, monomer.

It localises to the periplasm. Its function is as follows. Inhibitor of the extracellular proteases A, B, and C of E.chrysanthemi and the S.marcescens 50 kDa extracellular protease. It forms a non-covalent bond with the proteases and may prevent autocatalytic cleavage of the proteases zymogen in the periplasm. In Dickeya chrysanthemi (Pectobacterium chrysanthemi), this protein is Proteinase inhibitor (inh).